A 386-amino-acid polypeptide reads, in one-letter code: Chaperone protein DnaJ (386 aa).

The 66-residue stretch at 6–71 folds into the J domain; it reads DYYEILGVDR…QKRARYDQFG (66 aa). The CR-type zinc-finger motif lies at 144–226; sequence GTEKEVTVSR…CGGKGRVRKH (83 aa). Residues Cys-157, Cys-160, Cys-174, Cys-177, Cys-200, Cys-203, Cys-214, and Cys-217 each coordinate Zn(2+). 4 CXXCXGXG motif repeats span residues 157-164, 174-181, 200-207, and 214-221; these read CPTCSGSG, CRQCNGTG, CDVCHGEG, and CETCGGKG.

This sequence belongs to the DnaJ family. In terms of assembly, homodimer. Requires Zn(2+) as cofactor.

Its subcellular location is the cytoplasm. Participates actively in the response to hyperosmotic and heat shock by preventing the aggregation of stress-denatured proteins and by disaggregating proteins, also in an autonomous, DnaK-independent fashion. Unfolded proteins bind initially to DnaJ; upon interaction with the DnaJ-bound protein, DnaK hydrolyzes its bound ATP, resulting in the formation of a stable complex. GrpE releases ADP from DnaK; ATP binding to DnaK triggers the release of the substrate protein, thus completing the reaction cycle. Several rounds of ATP-dependent interactions between DnaJ, DnaK and GrpE are required for fully efficient folding. Also involved, together with DnaK and GrpE, in the DNA replication of plasmids through activation of initiation proteins. In Acetivibrio thermocellus (strain ATCC 27405 / DSM 1237 / JCM 9322 / NBRC 103400 / NCIMB 10682 / NRRL B-4536 / VPI 7372) (Clostridium thermocellum), this protein is Chaperone protein DnaJ.